We begin with the raw amino-acid sequence, 452 residues long: tRNA modification GTPase MnmE (452 aa).

Residues Arg25, Glu82, and Arg125 each coordinate (6S)-5-formyl-5,6,7,8-tetrahydrofolate. The 154-residue stretch at 221–374 (GLHVVLAGKP…LRARLLALAG (154 aa)) folds into the TrmE-type G domain. A K(+)-binding site is contributed by Asn231. Residues 231-236 (NVGKSS), 250-256 (TPIAGTT), 275-278 (DTAG), and 355-357 (SAR) each bind GTP. Mg(2+) is bound at residue Ser235. K(+) is bound by residues Thr250, Ile252, and Thr255. A Mg(2+)-binding site is contributed by Thr256. (6S)-5-formyl-5,6,7,8-tetrahydrofolate is bound at residue Lys452.

The protein belongs to the TRAFAC class TrmE-Era-EngA-EngB-Septin-like GTPase superfamily. TrmE GTPase family. As to quaternary structure, homodimer. Heterotetramer of two MnmE and two MnmG subunits. It depends on K(+) as a cofactor.

The protein localises to the cytoplasm. Exhibits a very high intrinsic GTPase hydrolysis rate. Involved in the addition of a carboxymethylaminomethyl (cmnm) group at the wobble position (U34) of certain tRNAs, forming tRNA-cmnm(5)s(2)U34. In Bordetella petrii (strain ATCC BAA-461 / DSM 12804 / CCUG 43448), this protein is tRNA modification GTPase MnmE.